A 476-amino-acid chain; its full sequence is GTPase Der (476 aa).

2 EngA-type G domains span residues 3 to 167 and 205 to 380; these read FTVA…GEER and LRVA…KVWN. Residues 9–16, 56–60, 119–122, 211–218, 258–262, and 323–326 each bind GTP; these read GRPNVGKS, DTAGL, NKSE, GRPNAGKS, DTAGM, and NKWD. One can recognise a KH-like domain in the interval 381 to 465; that stretch reads RRISTARLNR…PIRVHFRASE (85 aa).

The protein belongs to the TRAFAC class TrmE-Era-EngA-EngB-Septin-like GTPase superfamily. EngA (Der) GTPase family. In terms of assembly, associates with the 50S ribosomal subunit.

Functionally, GTPase that plays an essential role in the late steps of ribosome biogenesis. The chain is GTPase Der from Rhizobium meliloti (strain 1021) (Ensifer meliloti).